Reading from the N-terminus, the 374-residue chain is Alcohol dehydrogenase class-3 (374 aa).

Ala2 carries the N-acetylalanine modification. Cys45, His67, Cys97, Cys100, Cys103, Cys111, and Cys174 together coordinate Zn(2+). Lys233 carries the post-translational modification N6-succinyllysine. Ser247 bears the Phosphoserine mark. N6-succinyllysine is present on Lys315. A phosphoserine mark is found at Ser324 and Ser351.

The protein belongs to the zinc-containing alcohol dehydrogenase family. Class-III subfamily. Homodimer. Requires Zn(2+) as cofactor.

It is found in the cytoplasm. It catalyses the reaction a primary alcohol + NAD(+) = an aldehyde + NADH + H(+). The enzyme catalyses a secondary alcohol + NAD(+) = a ketone + NADH + H(+). The catalysed reaction is S-(hydroxymethyl)glutathione + NADP(+) = S-formylglutathione + NADPH + H(+). It carries out the reaction S-(hydroxymethyl)glutathione + NAD(+) = S-formylglutathione + NADH + H(+). It catalyses the reaction 20-oxo-(5Z,8Z,11Z,14Z)-eicosatetraenoate + NAD(+) + H2O = (5Z,8Z,11Z,14Z)-eicosatetraenedioate + NADH + 2 H(+). The enzyme catalyses 20-hydroxy-(5Z,8Z,11Z,14Z)-eicosatetraenoate + NAD(+) = 20-oxo-(5Z,8Z,11Z,14Z)-eicosatetraenoate + NADH + H(+). The catalysed reaction is S-nitrosoglutathione + NADH + H(+) = S-(hydroxysulfenamide)glutathione + NAD(+). In terms of biological role, catalyzes the oxidation of long-chain primary alcohols and the oxidation of S-(hydroxymethyl) glutathione. Also oxidizes long chain omega-hydroxy fatty acids, such as 20-HETE, producing both the intermediate aldehyde, 20-oxoarachidonate and the end product, a dicarboxylic acid, (5Z,8Z,11Z,14Z)-eicosatetraenedioate. Class-III ADH is remarkably ineffective in oxidizing ethanol. Required for clearance of cellular formaldehyde, a cytotoxic and carcinogenic metabolite that induces DNA damage. Also acts as a S-nitroso-glutathione reductase by catalyzing the NADH-dependent reduction of S-nitrosoglutathione, thereby regulating protein S-nitrosylation. This is Alcohol dehydrogenase class-3 from Homo sapiens (Human).